Consider the following 178-residue polypeptide: Platelet inhibitor triplatin-2 (178 aa).

The N-terminal stretch at 1–18 is a signal peptide; sequence MKMIISLTFLGILMLAFA. 3 disulfides stabilise this stretch: Cys25–Cys134, Cys60–Cys178, and Cys90–Cys106.

The protein belongs to the calycin superfamily. Triabin family. In terms of tissue distribution, expressed in salivary glands.

The protein resides in the secreted. In terms of biological role, inhibits platelet aggregation and vasoconstriction through binding to distinct eicosanoids involved in inflammation (acts as a scavenger), and has a role in inhibiting host innate immunity by impairing platelet-assisted formation of neutrophil extracellular traps (NETs). Inhibits platelet aggregation by collagen, and low doses of thromboxane A2 mimetic (TXA2 mimetic), and arachidonic acid (AA) without affecting aggregation induced by ADP, convulxin (GP6 agonist), and PMA. Binds to TXA2, TXB2, prostaglandine H2 mimetic (PGH2 mimetic), PGJ2, and PGF2alpha. Binding is not observed to leukotrienes, AA, and biogenic amines (PGE1, 5(S)-HETE, 12(S)-HETE, 20-HETE, norepinephrine, epinephrine, serotonin, LTC4 and ADP). Induces relaxation of aorta rat previously contracted with TXA2 mimetic. Moreover, it also impairs platelet-assisted formation of neutrophil extracellular traps (NETs). NETs are web-like structures of DNA and proteins that play an important role in killing of pathogens. In addition, NETs are implicated in thrombus formation. In vivo, this protein exhibits antithrombotic activity in two distinct mice models that are highly dependent on platelets. It is noteworthy that it inhibits thrombosis without promoting excessive bleeding. The chain is Platelet inhibitor triplatin-2 from Triatoma infestans (Assassin bug).